Consider the following 1675-residue polypeptide: Clathrin heavy chain 1 (1675 aa).

Position 2 is an N-acetylalanine (alanine 2). Residues 2–479 form a globular terminal domain region; it reads AQILPIRFQE…VDPTLALSVY (478 aa). WD40-like repeat regions lie at residues 24-67, 68-107, 108-149, 150-195, 196-257, 258-301, and 302-330; these read NIGF…RPIS, ADSA…MTDD, VTFW…SSLA, GCQI…QPIE, GHAA…PEAQ, NDFP…ISGE, and TIFV…VCVE. Position 67 is a phosphoserine (serine 67). Threonine 105 bears the Phosphothreonine mark. The residue at position 184 (tyrosine 184) is a Phosphotyrosine. Residue threonine 394 is modified to Phosphothreonine. A binding site for the uncoating ATPase, involved in lattice disassembly region spans residues 449-465; the sequence is EKWLKEDKLECSEELGD. The tract at residues 480-523 is flexible linker; that stretch reads LRANVPNKVIQCFAETGQVQKIVLYAKKVGYTPDWIFLLRNVMR. The distal segment stretch occupies residues 524–634; it reads ISPDQGQQFA…RALEHFTDLY (111 aa). Positions 524–1675 are heavy chain arm; the sequence is ISPDQGQQFA…QPQPGFGYSM (1152 aa). 7 CHCR repeats span residues 537-683, 686-828, 833-972, 979-1124, 1128-1269, 1274-1420, and 1423-1566; these read VQDE…QICV, ASKY…SEDV, ILVV…PLID, LSET…VKEA, YIKA…FRLA, LHIV…LLLN, and LMVL…RECF. Phosphotyrosine is present on tyrosine 634. The tract at residues 639-1675 is proximal segment; sequence AVVHTHLLNP…QPQPGFGYSM (1037 aa). Lysine 737 is subject to N6-succinyllysine. Position 856 is an N6-acetyllysine (lysine 856). Position 899 is a phosphotyrosine (tyrosine 899). Serine 1167 is modified (phosphoserine). Tyrosine 1206 is modified (phosphotyrosine). Residues 1213–1522 form an involved in binding clathrin light chain region; the sequence is AAKLLYNNVS…YLFKGNNRWK (310 aa). Serine 1229 is modified (phosphoserine). Lysine 1441 carries the post-translational modification N6-acetyllysine; alternate. Lysine 1441 is subject to N6-succinyllysine; alternate. Phosphotyrosine is present on residues tyrosine 1477 and tyrosine 1487. Serine 1494 carries the post-translational modification Phosphoserine. At lysine 1501 the chain carries N6-acetyllysine. The interval 1550 to 1675 is trimerization; the sequence is AEELLQWFLQ…QPQPGFGYSM (126 aa).

It belongs to the clathrin heavy chain family. In terms of assembly, clathrin triskelions, composed of 3 heavy chains and 3 light chains, are the basic subunits of the clathrin coat. In the presence of light chains, hub assembly is influenced by both the pH and the concentration of calcium. Interacts with HIP1. Interacts with DENND1A, DENND1B and DENND1C. Interacts with ERBB2. Interacts with FKBP6. Interacts with OCRL. Interacts with CKAP5 and TACC3 forming the TACC3/ch-TOG/clathrin complex located at spindle inter-microtubules bridges; the complex implicates clathrin triskelions; TACC3 and CLTC are proposed to form a composite microtubule interaction surface. Plays a role in early autophagosome formation. Interacts with ATG16L1 (via N-terminus). Interacts with RFTN1; the interaction occurs in response to pathogens. Interacts with USP2 isoform 2. Interacts with TMEM106B (via N-terminus). Interacts with DNAJC6; this interaction produces a local change in heavy-chain contacts, creating a detectable global distortion of the clathrin coat and leads to the recruitment of HSPA8.

It is found in the cytoplasmic vesicle membrane. The protein localises to the membrane. Its subcellular location is the coated pit. The protein resides in the melanosome. It localises to the cytoplasm. It is found in the cytoskeleton. The protein localises to the spindle. Its function is as follows. Clathrin is the major protein of the polyhedral coat of coated pits and vesicles. Two different adapter protein complexes link the clathrin lattice either to the plasma membrane or to the trans-Golgi network. Acts as a component of the TACC3/ch-TOG/clathrin complex proposed to contribute to stabilization of kinetochore fibers of the mitotic spindle by acting as inter-microtubule bridge. The TACC3/ch-TOG/clathrin complex is required for the maintenance of kinetochore fiber tension. Plays a role in early autophagosome formation. Interaction with DNAJC6 mediates the recruitment of HSPA8 to the clathrin lattice and creates local destabilization of the lattice promoting uncoating. The chain is Clathrin heavy chain 1 from Mus musculus (Mouse).